Consider the following 88-residue polypeptide: Small ribosomal subunit protein bS20 (88 aa).

Positions 1–27 (MANTPQAKKRARQNEKARKHNASMRSM) are disordered. The span at 7–22 (AKKRARQNEKARKHNA) shows a compositional bias: basic residues.

This sequence belongs to the bacterial ribosomal protein bS20 family.

Functionally, binds directly to 16S ribosomal RNA. The chain is Small ribosomal subunit protein bS20 from Cellvibrio japonicus (strain Ueda107) (Pseudomonas fluorescens subsp. cellulosa).